A 724-amino-acid chain; its full sequence is Catalase-peroxidase (724 aa).

The segment at residues 98 to 226 is a cross-link (tryptophyl-tyrosyl-methioninium (Trp-Tyr) (with M-252)); it reads WHSAGSYRLA…LAAVQMGLIY (129 aa). His99 serves as the catalytic Proton acceptor. Positions 226–252 form a cross-link, tryptophyl-tyrosyl-methioninium (Tyr-Met) (with W-98); it reads YVNPEGVNGKPDPLKTAAQVRTTFARM. His267 is a binding site for heme b.

Belongs to the peroxidase family. Peroxidase/catalase subfamily. In terms of assembly, homodimer or homotetramer. Heme b is required as a cofactor. Post-translationally, formation of the three residue Trp-Tyr-Met cross-link is important for the catalase, but not the peroxidase activity of the enzyme.

It carries out the reaction H2O2 + AH2 = A + 2 H2O. It catalyses the reaction 2 H2O2 = O2 + 2 H2O. Bifunctional enzyme with both catalase and broad-spectrum peroxidase activity. The sequence is that of Catalase-peroxidase from Maricaulis maris (strain MCS10) (Caulobacter maris).